Reading from the N-terminus, the 660-residue chain is UvrABC system protein B (660 aa).

The region spanning 26 to 196 is the Helicase ATP-binding domain; sequence DGIDEKKEHQ…ELNKGQFDVK (171 aa). 39–46 is an ATP binding site; that stretch reads GVTGSGKT. The short motif at 92-115 is the Beta-hairpin element; it reads YFDFYKPEAYIPKSDLYIEKTSKN. In terms of domain architecture, Helicase C-terminal spans 431-593; sequence QIEDIYDHLK…IIPKTIVKPI (163 aa). Residues 622-657 form the UVR domain; sequence KKFIDQMVRKMTQLAKANKFEEAIEIRDYLIEIGIE.

Belongs to the UvrB family. As to quaternary structure, forms a heterotetramer with UvrA during the search for lesions. Interacts with UvrC in an incision complex.

The protein resides in the cytoplasm. The UvrABC repair system catalyzes the recognition and processing of DNA lesions. A damage recognition complex composed of 2 UvrA and 2 UvrB subunits scans DNA for abnormalities. Upon binding of the UvrA(2)B(2) complex to a putative damaged site, the DNA wraps around one UvrB monomer. DNA wrap is dependent on ATP binding by UvrB and probably causes local melting of the DNA helix, facilitating insertion of UvrB beta-hairpin between the DNA strands. Then UvrB probes one DNA strand for the presence of a lesion. If a lesion is found the UvrA subunits dissociate and the UvrB-DNA preincision complex is formed. This complex is subsequently bound by UvrC and the second UvrB is released. If no lesion is found, the DNA wraps around the other UvrB subunit that will check the other stand for damage. The polypeptide is UvrABC system protein B (Metamycoplasma arthritidis (strain 158L3-1) (Mycoplasma arthritidis)).